A 295-amino-acid polypeptide reads, in one-letter code: Bifunctional protein FolD (295 aa).

NADP(+) is bound by residues 164–166 (GRS), Ser-193, and Ile-234.

Belongs to the tetrahydrofolate dehydrogenase/cyclohydrolase family. In terms of assembly, homodimer.

The catalysed reaction is (6R)-5,10-methylene-5,6,7,8-tetrahydrofolate + NADP(+) = (6R)-5,10-methenyltetrahydrofolate + NADPH. The enzyme catalyses (6R)-5,10-methenyltetrahydrofolate + H2O = (6R)-10-formyltetrahydrofolate + H(+). The protein operates within one-carbon metabolism; tetrahydrofolate interconversion. Catalyzes the oxidation of 5,10-methylenetetrahydrofolate to 5,10-methenyltetrahydrofolate and then the hydrolysis of 5,10-methenyltetrahydrofolate to 10-formyltetrahydrofolate. The polypeptide is Bifunctional protein FolD (Flavobacterium johnsoniae (strain ATCC 17061 / DSM 2064 / JCM 8514 / BCRC 14874 / CCUG 350202 / NBRC 14942 / NCIMB 11054 / UW101) (Cytophaga johnsonae)).